Here is a 275-residue protein sequence, read N- to C-terminus: Probable histone chaperone asf-1 (275 aa).

3 stretches are compositionally biased toward acidic residues: residues 157 to 166 (EDPVAEPVED), 183 to 207 (DGQEDDDEEEEDDDEMEANAEEVDL), and 230 to 247 (KMEDDGANEDVDMADDEP). The disordered stretch occupies residues 157–275 (EDPVAEPVED…SDKTNNEMVQ (119 aa)). Positions 265–275 (LSDKTNNEMVQ) are enriched in basic and acidic residues.

Belongs to the ASF1 family. In terms of assembly, interacts with histone H3 and histone H4.

It is found in the nucleus. Histone chaperone that facilitates histone deposition and histone exchange and removal during nucleosome assembly and disassembly. In Caenorhabditis elegans, this protein is Probable histone chaperone asf-1.